Consider the following 185-residue polypeptide: Recombination protein RecR (185 aa).

A C4-type zinc finger spans residues cysteine 44–cysteine 59. Positions asparagine 67–proline 161 constitute a Toprim domain.

This sequence belongs to the RecR family.

Functionally, may play a role in DNA repair. It seems to be involved in an RecBC-independent recombinational process of DNA repair. It may act with RecF and RecO. The sequence is that of Recombination protein RecR from Trichormus variabilis (strain ATCC 29413 / PCC 7937) (Anabaena variabilis).